The primary structure comprises 1386 residues: Adhesin AWP3b (1386 aa).

A signal peptide spans 1-19 (MISFVTLLAILGLLSISWA). 3 disulfide bridges follow: Cys-115–Cys-145, Cys-144–Cys-178, and Cys-304–Cys-341. N-linked (GlcNAc...) asparagine glycosylation is present at Asn-117. Residues Asn-315, Asn-345, Asn-468, and Asn-526 are each glycosylated (N-linked (GlcNAc...) asparagine). The interval 429 to 507 (TTDSPGHTIT…SSPTSDFSSV (79 aa)) is disordered. Disordered stretches follow at residues 530–553 (IVDS…SSSM) and 612–690 (TTDS…FSSV). 2 N-linked (GlcNAc...) asparagine glycosylation sites follow: Asn-651 and Asn-709. Disordered regions lie at residues 714–739 (VDSS…MSSS) and 795–873 (TTDS…FSSV). N-linked (GlcNAc...) asparagine glycans are attached at residues Asn-834, Asn-898, Asn-1008, Asn-1017, and Asn-1096. The disordered stretch occupies residues 1000 to 1032 (TIQESELSNTSRTTMTSNSSVSISSTSSRSSFS). 2 stretches are compositionally biased toward polar residues: residues 1140–1150 (SHPVATNSGDK) and 1159–1177 (QVST…SSFD). Residues 1140-1186 (SHPVATNSGDKPTTPKRSEQVSTTMTSSGPTPDTSSFDTDGMSAYSR) form a disordered region. Residue Asn-1197 is glycosylated (N-linked (GlcNAc...) asparagine). Residues 1198 to 1218 (KSSTSQLGNNKQTFSNLQLES) are compositionally biased toward polar residues. Positions 1198–1227 (KSSTSQLGNNKQTFSNLQLESTRPHSENEV) are disordered. Asn-1229 carries an N-linked (GlcNAc...) asparagine glycan. The segment covering 1241 to 1259 (STYGTNNVNPLSPTGSISI) has biased composition (polar residues). The interval 1241–1269 (STYGTNNVNPLSPTGSISIPLTEDGQGDN) is disordered. Residue Asn-1287 is glycosylated (N-linked (GlcNAc...) asparagine).

Its subcellular location is the secreted. The protein localises to the cell wall. May play a role in cell adhesion. In Candida glabrata (strain ATCC 2001 / BCRC 20586 / JCM 3761 / NBRC 0622 / NRRL Y-65 / CBS 138) (Yeast), this protein is Adhesin AWP3b.